An 87-amino-acid polypeptide reads, in one-letter code: Toxin CsEv2 (87 aa).

Residues 1 to 19 form the signal peptide; sequence MNSLLIITACLFLIGTVWA. The region spanning 20 to 85 is the LCN-type CS-alpha/beta domain; it reads KEGYLVNKST…TYPLPNKSCS (66 aa). 4 disulfide bridges follow: cysteine 31/cysteine 84, cysteine 35/cysteine 60, cysteine 44/cysteine 65, and cysteine 48/cysteine 67.

Belongs to the long (4 C-C) scorpion toxin superfamily. Sodium channel inhibitor family. Beta subfamily. In terms of tissue distribution, expressed by the venom gland.

It is found in the secreted. In terms of biological role, beta toxins bind voltage-independently at site-4 of sodium channels (Nav) and shift the voltage of activation toward more negative potentials thereby affecting sodium channel activation and promoting spontaneous and repetitive firing. Induces immediate paralysis in crickets after injection, with a total paralysis occurring within 15-30 minutes and lasting for 1-2 hours. Is also lethal to vertebrate (chicks) when injected in very high dosages (more that 100 mg/kg). This chain is Toxin CsEv2, found in Centruroides sculpturatus (Arizona bark scorpion).